Here is a 289-residue protein sequence, read N- to C-terminus: uncharacterized protein (289 aa).

Positions 25-66 are disordered; the sequence is GGSGDSQSAHTPSTSIHTQNNSTPNKNTSTPPVNVSNANNLE. The segment covering 33–43 has biased composition (polar residues); that stretch reads AHTPSTSIHTQ. Residues 44-59 are compositionally biased toward low complexity; it reads NNSTPNKNTSTPPVNV.

This is an uncharacterized protein from Haemophilus influenzae (strain ATCC 51907 / DSM 11121 / KW20 / Rd).